The primary structure comprises 330 residues: Olfactory receptor 11H6 (330 aa).

The Extracellular segment spans residues 1-43 (MFFIIHSLVTSVFLTALGPQNRTMHFVTEFVLLGFHGQREMQS). An N-linked (GlcNAc...) asparagine glycan is attached at Asn-21. Residues 44-64 (CFFSFILVLYLLTLLGNGAIV) traverse the membrane as a helical segment. Residues 65–72 (CAVKLDRR) lie on the Cytoplasmic side of the membrane. Residues 73–93 (LHTPMYILLGNFAFLEIWYIS) form a helical membrane-spanning segment. Residues 94–117 (STVPNMLVNILSEIKTISFSGCFL) lie on the Extracellular side of the membrane. A disulfide bridge connects residues Cys-115 and Cys-207. A helical transmembrane segment spans residues 118 to 138 (QFYFFFSLGTTECFFLSVMAY). The Cytoplasmic segment spans residues 139-157 (DRYLAICRPLHYPSIMTGK). Residues 158–178 (FCIILVCVCWVGGFLCYPVPI) traverse the membrane as a helical segment. The Extracellular segment spans residues 179 to 215 (VLISQLPFCGPNIIDHLVCDPGPLFALACISAPSTEL). A helical transmembrane segment spans residues 216–235 (ICYTFNSMIIFGPFLSILGS). The Cytoplasmic segment spans residues 236–255 (YTLVIRAVLCIPSGAGRTKA). Residues 256–276 (FSTCGSHLMVVSLFYGTLMVM) traverse the membrane as a helical segment. Residues 277–289 (YVSPTSGNPAGMQ) are Extracellular-facing. Residues 290–310 (KIITLVYTAMTPFLNPLIYSL) traverse the membrane as a helical segment. Over 311-330 (RNKDMKDALKRVLGLTVSQN) the chain is Cytoplasmic.

The protein belongs to the G-protein coupled receptor 1 family.

The protein localises to the cell membrane. Its function is as follows. Odorant receptor. The chain is Olfactory receptor 11H6 (OR11H6) from Homo sapiens (Human).